The chain runs to 165 residues: Ribosome maturation factor RimM (165 aa).

In terms of domain architecture, PRC barrel spans 94–165 (EDEFYIADLT…YVILNYQREA (72 aa)).

It belongs to the RimM family. In terms of assembly, binds ribosomal protein uS19.

Its subcellular location is the cytoplasm. An accessory protein needed during the final step in the assembly of 30S ribosomal subunit, possibly for assembly of the head region. Essential for efficient processing of 16S rRNA. May be needed both before and after RbfA during the maturation of 16S rRNA. It has affinity for free ribosomal 30S subunits but not for 70S ribosomes. The protein is Ribosome maturation factor RimM of Rickettsia conorii (strain ATCC VR-613 / Malish 7).